Consider the following 510-residue polypeptide: Glutamate decarboxylase (510 aa).

107 to 109 lines the substrate pocket; that stretch reads QLS. K322 is modified (N6-(pyridoxal phosphate)lysine). R483 lines the substrate pocket.

The protein belongs to the group II decarboxylase family. Homodimer. The cofactor is pyridoxal 5'-phosphate. Expressed in the head (at protein level).

The enzyme catalyses L-glutamate + H(+) = 4-aminobutanoate + CO2. Catalyzes the production of GABA. This chain is Glutamate decarboxylase (Gad1), found in Drosophila melanogaster (Fruit fly).